The sequence spans 274 residues: Undecaprenyl-diphosphatase (274 aa).

Helical transmembrane passes span 1–21 (MDWLYSLIYGIVEGITEFLPI), 42–62 (VKDTFEVVIQGGAILAVLVYY), 81–101 (LWLGVVLACIPAVILGVLFGD), 107–127 (LFRPSVVAWALIVGGVLMWLL), 142–162 (ISAGKALAIGAAQCLALLWPG), 184–204 (TKFSFYLGVPTLGGAALLDFI), 213–233 (IGVVNVAIGAVTSFVVAYFAI), and 248–268 (FAVYRVVVGVLILVLIARGVL).

This sequence belongs to the UppP family.

The protein localises to the cell membrane. The enzyme catalyses di-trans,octa-cis-undecaprenyl diphosphate + H2O = di-trans,octa-cis-undecaprenyl phosphate + phosphate + H(+). Functionally, catalyzes the dephosphorylation of undecaprenyl diphosphate (UPP). Confers resistance to bacitracin. In Deinococcus radiodurans (strain ATCC 13939 / DSM 20539 / JCM 16871 / CCUG 27074 / LMG 4051 / NBRC 15346 / NCIMB 9279 / VKM B-1422 / R1), this protein is Undecaprenyl-diphosphatase.